Here is a 130-residue protein sequence, read N- to C-terminus: Small ribosomal subunit protein uS8 (130 aa).

It belongs to the universal ribosomal protein uS8 family. In terms of assembly, part of the 30S ribosomal subunit. Contacts proteins S5 and S12.

One of the primary rRNA binding proteins, it binds directly to 16S rRNA central domain where it helps coordinate assembly of the platform of the 30S subunit. This chain is Small ribosomal subunit protein uS8, found in Vibrio atlanticus (strain LGP32) (Vibrio splendidus (strain Mel32)).